Here is a 475-residue protein sequence, read N- to C-terminus: ATP synthase subunit beta, chloroplastic (475 aa).

An ATP-binding site is contributed by 156–163 (GGAGVGKT).

This sequence belongs to the ATPase alpha/beta chains family. F-type ATPases have 2 components, CF(1) - the catalytic core - and CF(0) - the membrane proton channel. CF(1) has five subunits: alpha(3), beta(3), gamma(1), delta(1), epsilon(1). CF(0) has four main subunits: a(1), b(1), b'(1) and c(9-12).

The protein localises to the plastid. It localises to the chloroplast thylakoid membrane. It carries out the reaction ATP + H2O + 4 H(+)(in) = ADP + phosphate + 5 H(+)(out). In terms of biological role, produces ATP from ADP in the presence of a proton gradient across the membrane. The catalytic sites are hosted primarily by the beta subunits. The polypeptide is ATP synthase subunit beta, chloroplastic (Gracilaria tenuistipitata var. liui (Red alga)).